A 384-amino-acid polypeptide reads, in one-letter code: Dual specificity protein phosphatase 9 (384 aa).

Position 16 is a phosphoserine (Ser16). The Rhodanese domain occupies 18 to 139; that stretch reads PRPRLLLLDC…FQAECPHLCE (122 aa). The 144-residue stretch at 203–346 folds into the Tyrosine-protein phosphatase domain; that stretch reads FPVQILPNLY…LLDFERSLRL (144 aa). At Ser262 the chain carries Phosphoserine. The active-site Phosphocysteine intermediate is the Cys290. The segment at 348–384 is disordered; the sequence is ERHSQEQGSGGQASAASNPPSFFTTPTSDGAFELAPT. Ser351 carries the phosphoserine modification. Positions 359 to 375 are enriched in polar residues; that stretch reads QASAASNPPSFFTTPTS.

It belongs to the protein-tyrosine phosphatase family. Non-receptor class dual specificity subfamily.

It localises to the cytoplasm. The enzyme catalyses O-phospho-L-tyrosyl-[protein] + H2O = L-tyrosyl-[protein] + phosphate. It catalyses the reaction O-phospho-L-seryl-[protein] + H2O = L-seryl-[protein] + phosphate. It carries out the reaction O-phospho-L-threonyl-[protein] + H2O = L-threonyl-[protein] + phosphate. Inactivates MAP kinases. Has a specificity for the ERK family. The protein is Dual specificity protein phosphatase 9 (DUSP9) of Homo sapiens (Human).